The primary structure comprises 414 residues: Serine/threonine transporter SstT (414 aa).

8 helical membrane passes run 16 to 36 (GSLV…AWIS), 46 to 66 (LGTL…LMLV), 84 to 104 (ILFL…VFSF), 143 to 163 (ALLN…GFAL), 180 to 200 (AVTF…FGLV), 219 to 239 (LVVL…LLVF), 300 to 320 (MAGA…TLGV), and 332 to 352 (VVAS…LLLI).

Belongs to the dicarboxylate/amino acid:cation symporter (DAACS) (TC 2.A.23) family.

The protein resides in the cell inner membrane. It carries out the reaction L-serine(in) + Na(+)(in) = L-serine(out) + Na(+)(out). The enzyme catalyses L-threonine(in) + Na(+)(in) = L-threonine(out) + Na(+)(out). Involved in the import of serine and threonine into the cell, with the concomitant import of sodium (symport system). The chain is Serine/threonine transporter SstT from Salmonella agona (strain SL483).